A 134-amino-acid chain; its full sequence is Large-conductance mechanosensitive channel (134 aa).

2 helical membrane passes run 16-36 (VIDL…VTAL) and 81-101 (GDFI…FIIV).

Belongs to the MscL family. In terms of assembly, homopentamer.

It localises to the cell inner membrane. Functionally, channel that opens in response to stretch forces in the membrane lipid bilayer. May participate in the regulation of osmotic pressure changes within the cell. The polypeptide is Large-conductance mechanosensitive channel (Xylella fastidiosa (strain Temecula1 / ATCC 700964)).